The following is a 274-amino-acid chain: MLPTKQAACSFINVAFSYNELPLIRELSFSVYEGEYVCIVGHNGSGKSTISKLLTGLLKPQAGEIKIFGKTVDFDNVSYLRNNIGIIFQNPDNQFIGITVEDDIAFGLENKCFSRQKIKAIIDEVTLQTQTDGFIKQEPHNLSGGQKQRVAIASVLALNPAIIIFDESTAMLDPKAKKTIKQFMVKLAKQGKCVISITHDMEEVTKADKVLVMNEGKLIKQGKPVEVFTSEQELQKIRLDIPFSLSLSTKIRGITSTIDYQTLIKSIAKLWKKR.

The region spanning 9–240 (CSFINVAFSY…EQELQKIRLD (232 aa)) is the ABC transporter domain. 41-48 (GHNGSGKS) is a binding site for ATP.

This sequence belongs to the ABC transporter superfamily. Energy-coupling factor EcfA family. In terms of assembly, forms a stable energy-coupling factor (ECF) transporter complex composed of 2 membrane-embedded substrate-binding proteins (S component), 2 ATP-binding proteins (A component) and 2 transmembrane proteins (T component).

The protein localises to the cell membrane. In terms of biological role, ATP-binding (A) component of a common energy-coupling factor (ECF) ABC-transporter complex. Unlike classic ABC transporters this ECF transporter provides the energy necessary to transport a number of different substrates. The polypeptide is Energy-coupling factor transporter ATP-binding protein EcfA1 (Mycoplasma genitalium (strain ATCC 33530 / DSM 19775 / NCTC 10195 / G37) (Mycoplasmoides genitalium)).